Reading from the N-terminus, the 1383-residue chain is DNA-directed RNA polymerase subunit beta'' (1383 aa).

Residues Cys220, Cys289, Cys296, and Cys299 each coordinate Zn(2+).

Belongs to the RNA polymerase beta' chain family. RpoC2 subfamily. In terms of assembly, in plastids the minimal PEP RNA polymerase catalytic core is composed of four subunits: alpha, beta, beta', and beta''. When a (nuclear-encoded) sigma factor is associated with the core the holoenzyme is formed, which can initiate transcription. Requires Zn(2+) as cofactor.

The protein resides in the plastid. It localises to the chloroplast. The catalysed reaction is RNA(n) + a ribonucleoside 5'-triphosphate = RNA(n+1) + diphosphate. Functionally, DNA-dependent RNA polymerase catalyzes the transcription of DNA into RNA using the four ribonucleoside triphosphates as substrates. The sequence is that of DNA-directed RNA polymerase subunit beta'' from Oenothera biennis (German evening primrose).